The primary structure comprises 218 residues: Thiopurine S-methyltransferase (218 aa).

S-adenosyl-L-methionine is bound by residues W10, L45, E66, and R123.

Belongs to the class I-like SAM-binding methyltransferase superfamily. TPMT family.

The protein resides in the cytoplasm. It carries out the reaction S-adenosyl-L-methionine + a thiopurine = S-adenosyl-L-homocysteine + a thiopurine S-methylether.. The sequence is that of Thiopurine S-methyltransferase from Shewanella sp. (strain ANA-3).